A 189-amino-acid polypeptide reads, in one-letter code: Peptide deformylase (189 aa).

Fe cation contacts are provided by cysteine 116 and histidine 159. Residue glutamate 160 is part of the active site. Histidine 163 serves as a coordination point for Fe cation.

This sequence belongs to the polypeptide deformylase family. It depends on Fe(2+) as a cofactor.

It catalyses the reaction N-terminal N-formyl-L-methionyl-[peptide] + H2O = N-terminal L-methionyl-[peptide] + formate. In terms of biological role, removes the formyl group from the N-terminal Met of newly synthesized proteins. Requires at least a dipeptide for an efficient rate of reaction. N-terminal L-methionine is a prerequisite for activity but the enzyme has broad specificity at other positions. This is Peptide deformylase from Limosilactobacillus fermentum (strain NBRC 3956 / LMG 18251) (Lactobacillus fermentum).